The sequence spans 388 residues: Succinate--CoA ligase [ADP-forming] subunit beta (388 aa).

Positions 9 to 244 constitute an ATP-grasp domain; the sequence is KQLFARYGLP…QSQEDPREAQ (236 aa). ATP is bound by residues K46, 53–55, E99, T102, and E107; that span reads GRG. 2 residues coordinate Mg(2+): N199 and D213. Residues N264 and 321-323 contribute to the substrate site; that span reads GIV.

This sequence belongs to the succinate/malate CoA ligase beta subunit family. As to quaternary structure, heterotetramer of two alpha and two beta subunits. The cofactor is Mg(2+).

The enzyme catalyses succinate + ATP + CoA = succinyl-CoA + ADP + phosphate. It carries out the reaction GTP + succinate + CoA = succinyl-CoA + GDP + phosphate. Its pathway is carbohydrate metabolism; tricarboxylic acid cycle; succinate from succinyl-CoA (ligase route): step 1/1. Succinyl-CoA synthetase functions in the citric acid cycle (TCA), coupling the hydrolysis of succinyl-CoA to the synthesis of either ATP or GTP and thus represents the only step of substrate-level phosphorylation in the TCA. The beta subunit provides nucleotide specificity of the enzyme and binds the substrate succinate, while the binding sites for coenzyme A and phosphate are found in the alpha subunit. The polypeptide is Succinate--CoA ligase [ADP-forming] subunit beta (Salmonella choleraesuis (strain SC-B67)).